Here is a 494-residue protein sequence, read N- to C-terminus: GTPase Der (494 aa).

2 consecutive EngA-type G domains span residues 2–164 (KKIA…PEED) and 235–407 (IKIS…KNYS). GTP-binding positions include 8–15 (GRPNVGKS), 55–59 (DTGGL), 116–119 (NKID), 241–248 (GRTNVGKS), 288–292 (DTAGL), and 352–355 (NKWD). Residues 408–492 (QHIKTSELNV…PVLFKAKKRG (85 aa)) enclose the KH-like domain.

This sequence belongs to the TRAFAC class TrmE-Era-EngA-EngB-Septin-like GTPase superfamily. EngA (Der) GTPase family. Associates with the 50S ribosomal subunit.

In terms of biological role, GTPase that plays an essential role in the late steps of ribosome biogenesis. The chain is GTPase Der from Sulfurimonas denitrificans (strain ATCC 33889 / DSM 1251) (Thiomicrospira denitrificans (strain ATCC 33889 / DSM 1251)).